The chain runs to 387 residues: Odorant receptor 94a (387 aa).

Residues 1–45 lie on the Cytoplasmic side of the membrane; sequence MDKHKDRIESMRLILQVMQLFGLWPWSLKSEEEWTFTGFVKRNYR. A helical transmembrane segment spans residues 46–66; sequence FLLHLPITFTFIGLMWLEAFI. Over 67-75 the chain is Extracellular; that stretch reads SSNLEQAGQ. A helical membrane pass occupies residues 76–96; the sequence is VLYMSITEMALVVKILSIWHY. Residues 97-133 lie on the Cytoplasmic side of the membrane; the sequence is RTEAWRLMYELQHAPDYQLHNQEEVDFWRREQRFFKW. The chain crosses the membrane as a helical span at residues 134–154; sequence FFYIYILISLGVVYSGCTGVL. The Extracellular portion of the chain corresponds to 155–191; the sequence is FLEGYELPFAYYVPFEWQNERRYWFAYGYDMAGMTLT. Residues 192 to 212 traverse the membrane as a helical segment; sequence CISNITLDTLGCYFLFHISLL. The Cytoplasmic segment spans residues 213–255; that stretch reads YRLLGLRLRETKNMKNDTIFGQQLRAIFIMHQRIRSLTLTCQR. The helical transmembrane segment at 256-276 threads the bilayer; it reads IVSPYILSQIILSALIICFSG. The Extracellular portion of the chain corresponds to 277-290; that stretch reads YRLQHVGIRDNPGQ. A helical membrane pass occupies residues 291-311; the sequence is FISMLQFVSVMILQIYLPCYY. Topologically, residues 312 to 362 are cytoplasmic; it reads GNEITVYANQLTNEVYHTNWLECRPPIRKLLNAYMEHLKKPVTIRAGNFFA. The helical transmembrane segment at 363-383 threads the bilayer; the sequence is VGLPIFVKTINNAYSFLALLL. A glycan (N-linked (GlcNAc...) asparagine) is linked at Asn384. Topologically, residues 384-387 are extracellular; that stretch reads NVSN.

It belongs to the insect chemoreceptor superfamily. Heteromeric odorant receptor channel (TC 1.A.69) family. Or2a subfamily. Interacts with Orco. Complexes exist early in the endomembrane system in olfactory sensory neurons (OSNs), coupling these complexes to the conserved ciliary trafficking pathway.

It localises to the cell membrane. Functionally, odorant receptor which mediates acceptance or avoidance behavior, depending on its substrates. The odorant receptor repertoire encodes a large collection of odor stimuli that vary widely in identity, intensity, and duration. May form a complex with Orco to form odorant-sensing units, providing sensitive and prolonged odorant signaling and calcium permeability. The chain is Odorant receptor 94a (Or94a) from Drosophila melanogaster (Fruit fly).